We begin with the raw amino-acid sequence, 210 residues long: Cytochrome c4 (210 aa).

The N-terminal stretch at 1–20 (MNKVLVSLLLTLGITGMAHA) is a signal peptide. Heme c-binding residues include C34, C37, H38, M86, C139, C142, H143, and M187.

In terms of processing, binds 2 heme c groups covalently per subunit.

The protein resides in the periplasm. In terms of biological role, diheme, high potential cytochrome c believed to be an intermediate electron donor to terminal oxidation systems. This Stutzerimonas stutzeri (Pseudomonas stutzeri) protein is Cytochrome c4 (cc4).